The following is a 109-amino-acid chain: Nucleoid-associated protein ETA_24730 (109 aa).

It belongs to the YbaB/EbfC family. As to quaternary structure, homodimer.

The protein resides in the cytoplasm. Its subcellular location is the nucleoid. Binds to DNA and alters its conformation. May be involved in regulation of gene expression, nucleoid organization and DNA protection. The protein is Nucleoid-associated protein ETA_24730 of Erwinia tasmaniensis (strain DSM 17950 / CFBP 7177 / CIP 109463 / NCPPB 4357 / Et1/99).